Here is a 550-residue protein sequence, read N- to C-terminus: C-type lectin domain family 4 member F (550 aa).

Residues 1-42 (MKEAELNRDVAKFCTDNQCVILQPQGLGPKSAAPMAPRTLRH) lie on the Cytoplasmic side of the membrane. A helical; Signal-anchor for type II membrane protein transmembrane segment spans residues 43 to 69 (VQAIVALVVVTVFFSLLALFVVVLQPW). Residues 70 to 550 (RQKQNEDHPV…DWSVARTDQS (481 aa)) are Extracellular-facing. N-linked (GlcNAc...) asparagine glycosylation is found at N87, N93, N115, N132, N209, and N255. Residues 438–538 (NFCVSQGAHL…GTAYNWVCKK (101 aa)) form the C-type lectin domain. Intrachain disulfides connect C440–C536 and C516–C528.

As to expression, kupffer cells.

The protein resides in the membrane. Receptor with an affinity for galactose and fucose. Could be involved in endocytosis. This is C-type lectin domain family 4 member F (Clec4f) from Rattus norvegicus (Rat).